The chain runs to 553 residues: Putative transport protein PM1071 (553 aa).

5 helical membrane passes run 4–24, 28–48, 65–85, 91–111, and 157–177; these read IAITISLLALVAVIGLWIGHW, GVGLGIGGVLFGGIIVAHFTN, FGLILFVYTIGIQVGPGFFAS, LKLNGFAALIVLLGSLAVIVI, and MAYAMAYPFGICGILLSMWLI. 2 RCK C-terminal domains span residues 190–276 and 277–361; these read KNFL…VLGE and EVDV…ILGN. The next 6 helical transmembrane spans lie at 371 to 391, 403 to 425, 439 to 459, 464 to 484, 496 to 516, and 533 to 553; these read MLPVFIGIGLGVLLGSIPFHI, AGGPLVVALILARIGSIGKLYWF, IVLFLAVVGLKSGGNFVDTLV, LEWMVYGIFITFVPLMIVGIV, LCGLLAGSMTDPPALAFANAI, and LVMFLRIISPQLLAILLWTLL.

The protein belongs to the AAE transporter (TC 2.A.81) family. YidE subfamily.

The protein resides in the cell membrane. This is Putative transport protein PM1071 from Pasteurella multocida (strain Pm70).